A 1494-amino-acid polypeptide reads, in one-letter code: DNA-directed RNA polymerase subunit beta' (1494 aa).

Positions 67, 69, 82, and 85 each coordinate Zn(2+). Mg(2+) is bound by residues Asp-499, Asp-501, and Asp-503. Zn(2+)-binding residues include Cys-868, Cys-944, Cys-951, and Cys-954.

The protein belongs to the RNA polymerase beta' chain family. As to quaternary structure, the RNAP catalytic core consists of 2 alpha, 1 beta, 1 beta' and 1 omega subunit. When a sigma factor is associated with the core the holoenzyme is formed, which can initiate transcription. The cofactor is Mg(2+). Zn(2+) is required as a cofactor.

It carries out the reaction RNA(n) + a ribonucleoside 5'-triphosphate = RNA(n+1) + diphosphate. Its function is as follows. DNA-dependent RNA polymerase catalyzes the transcription of DNA into RNA using the four ribonucleoside triphosphates as substrates. In Chlorobaculum parvum (strain DSM 263 / NCIMB 8327) (Chlorobium vibrioforme subsp. thiosulfatophilum), this protein is DNA-directed RNA polymerase subunit beta'.